We begin with the raw amino-acid sequence, 899 residues long: Pre-mRNA-splicing factor 6 (899 aa).

The segment at Met1–Asp65 is disordered. A compositionally biased stretch (basic and acidic residues) spans Thr28 to Leu51. 13 HAT repeats span residues Glu221 to Lys253, Arg255 to Ser287, Val289 to Ser318, Thr319 to Asp350, Ala352 to Tyr381, Asn383 to Pro414, Pro493 to Ser525, Asn545 to Gln578, Leu608 to Tyr645, Leu648 to Ser680, Gly682 to Ile714, Gly751 to His783, and Ala819 to Arg851.

As to quaternary structure, component of the U4/U6-U5 tri-snRNP complex composed of the U4, U6 and U5 snRNAs and at least PRP3, PRP4, PRP6, PRP8, PRP18, PRP31, PRP38, SNU13, SNU23, SNU66, SNU114, SPP381, SMB1, SMD1, SMD2, SMD3, SMX2, SMX3, LSM2, LSM3, LSM4, LSM5, LSM6, LSM7, LSM8, BRR2 and DIB1.

Its subcellular location is the nucleus. In terms of biological role, participates in pre-mRNA splicing. Part of the U4/U5/U6 tri-snRNP complex, one of the building blocks of the spliceosome. The chain is Pre-mRNA-splicing factor 6 (PRP6) from Saccharomyces cerevisiae (strain ATCC 204508 / S288c) (Baker's yeast).